A 386-amino-acid polypeptide reads, in one-letter code: Manganese dependent endoglucanase Eg5A (386 aa).

The signal sequence occupies residues 1–17 (MLKYASIALALATLGVA). Residues 18–53 (QQQQWGQCGGIGWTGATTCVAGSVCSVLNPYYSQCI) form the CBM1 domain. The active-site Proton donor is the Glu-209. Glu-319 functions as the Nucleophile in the catalytic mechanism. Asn-324 carries an N-linked (GlcNAc...) asparagine glycan.

It belongs to the glycosyl hydrolase 5 (cellulase A) family. It depends on Mn(2+) as a cofactor.

The protein localises to the secreted. The catalysed reaction is Endohydrolysis of (1-&gt;4)-beta-D-glucosidic linkages in cellulose, lichenin and cereal beta-D-glucans.. Secreted manganese dependent endoglucanase that acts by cleaving the beta-1,4-glucose linkage. Exhibits high activity toward carboxymethyl-cellulose (CMC), barley glucan, and glucomannan. Displays low activity on larminarin and xyloglucan but does not hydrolyze hemicellulose substrates such as birchwood xylan, arabinoxylan, and arabinan. The sequence is that of Manganese dependent endoglucanase Eg5A from Phanerodontia chrysosporium (White-rot fungus).